The chain runs to 225 residues: Small ribosomal subunit protein uS3 (225 aa).

In terms of domain architecture, KH type-2 spans 18–87; that stretch reads VDEYLAKQFY…NPQITVTSVE (70 aa).

This sequence belongs to the universal ribosomal protein uS3 family. In terms of assembly, part of the 30S ribosomal subunit.

Binds the lower part of the 30S subunit head. The polypeptide is Small ribosomal subunit protein uS3 (Sulfurisphaera tokodaii (strain DSM 16993 / JCM 10545 / NBRC 100140 / 7) (Sulfolobus tokodaii)).